The chain runs to 383 residues: Probable L-tyrosine/L-aspartate decarboxylase (383 aa).

Lys227 carries the N6-(pyridoxal phosphate)lysine modification.

The protein belongs to the group II decarboxylase family. MfnA subfamily. Requires pyridoxal 5'-phosphate as cofactor.

It carries out the reaction L-tyrosine + H(+) = tyramine + CO2. The enzyme catalyses L-aspartate + H(+) = beta-alanine + CO2. The protein operates within cofactor biosynthesis; methanofuran biosynthesis. It functions in the pathway cofactor biosynthesis; coenzyme A biosynthesis. Its function is as follows. Catalyzes the decarboxylation of L-tyrosine to produce tyramine for methanofuran biosynthesis. Can also catalyze the decarboxylation of L-aspartate to produce beta-alanine for coenzyme A (CoA) biosynthesis. The chain is Probable L-tyrosine/L-aspartate decarboxylase from Methanothrix thermoacetophila (strain DSM 6194 / JCM 14653 / NBRC 101360 / PT) (Methanosaeta thermophila).